We begin with the raw amino-acid sequence, 662 residues long: UvrABC system protein B (662 aa).

One can recognise a Helicase ATP-binding domain in the interval 31-188 (DNIEGGEKAQ…NDLVDIQFER (158 aa)). 44 to 51 (GATGTGKT) provides a ligand contact to ATP. The Beta-hairpin signature appears at 97-120 (YYDYYQPEAYVPSSDTYIEKDSSV). Positions 435 to 601 (QIDDLLGEIN…TIKKEIRDLI (167 aa)) constitute a Helicase C-terminal domain. One can recognise a UVR domain in the interval 626–661 (KDMIKKLEGQMQEAAGLLDFELAAQIRDMILEIKAM).

The protein belongs to the UvrB family. As to quaternary structure, forms a heterotetramer with UvrA during the search for lesions. Interacts with UvrC in an incision complex.

It localises to the cytoplasm. In terms of biological role, the UvrABC repair system catalyzes the recognition and processing of DNA lesions. A damage recognition complex composed of 2 UvrA and 2 UvrB subunits scans DNA for abnormalities. Upon binding of the UvrA(2)B(2) complex to a putative damaged site, the DNA wraps around one UvrB monomer. DNA wrap is dependent on ATP binding by UvrB and probably causes local melting of the DNA helix, facilitating insertion of UvrB beta-hairpin between the DNA strands. Then UvrB probes one DNA strand for the presence of a lesion. If a lesion is found the UvrA subunits dissociate and the UvrB-DNA preincision complex is formed. This complex is subsequently bound by UvrC and the second UvrB is released. If no lesion is found, the DNA wraps around the other UvrB subunit that will check the other stand for damage. This is UvrABC system protein B from Streptococcus sanguinis (strain SK36).